Consider the following 274-residue polypeptide: tRNA-cytidine(32) 2-sulfurtransferase (274 aa).

Positions 40–45 (SGGKDS) match the PP-loop motif motif. [4Fe-4S] cluster-binding residues include C115, C118, and C206.

The protein belongs to the TtcA family. As to quaternary structure, homodimer. Mg(2+) serves as cofactor. The cofactor is [4Fe-4S] cluster.

Its subcellular location is the cytoplasm. The catalysed reaction is cytidine(32) in tRNA + S-sulfanyl-L-cysteinyl-[cysteine desulfurase] + AH2 + ATP = 2-thiocytidine(32) in tRNA + L-cysteinyl-[cysteine desulfurase] + A + AMP + diphosphate + H(+). It functions in the pathway tRNA modification. Its function is as follows. Catalyzes the ATP-dependent 2-thiolation of cytidine in position 32 of tRNA, to form 2-thiocytidine (s(2)C32). The sulfur atoms are provided by the cysteine/cysteine desulfurase (IscS) system. In Ectopseudomonas mendocina (strain ymp) (Pseudomonas mendocina), this protein is tRNA-cytidine(32) 2-sulfurtransferase.